We begin with the raw amino-acid sequence, 796 residues long: MSRTMNTNKPEENSTEGDAGKLEWKPKVKDEFKDISIYFSKEEWAEMGEWEKIRYRNVKRNYKMLISIGLRAPRPAFMCYQRQAIKPQINDNEDSDEEWTPKQQVSSPWVPFRVKHSKQQKETPRMPLSDKSSVKEVFGIENLLNTSGSEHAQKPVCSPEEGNTSGQHFGKKLKLRRKNVEVNRYRLRERKDLAYEEVSEPQDDDYLYCEKCQNFFIDSCPNHGPPVFVKDSVVDRGHPNHSVLSLPPGLRIGPSGIPEAGLGVWNEASDLPVGLHFGPYKGQITEDEEAANSGYSWLITKGRNCYEYVDGQDESQANWMRYVNCARDDEEQNLVAFQYHRKIFYRTCRVIRPGRELLVWYGDEYGQELGIKWGSKMKKGFTAGRELRTEIHPCFLCSLAFSSQKFLTQHVEWNHRTEIFPGASARINPKPGDPCPDQLQEHFDSQNKNDKASNEVKRKSKPRHKWTRQRISTAFSSTLKEQMRSEESKRTVEEELRTGQTTNIEDTAKSFIASETSRIERQCGQCFSDKSNVSEHQRTHTGEKPYICRECGRGFSQKSDLIKHQRTHTEEKPYICRECGRGFTQKSDLIKHQRTHTEEKPYICRECGRGFTQKSDLIKHQRTHTGEKPYICRECGRGFTQKSDLIKHQRTHTEEKPYICRECGRGFTQKSSLIRHQRTHTGEKPYICRECGLGFTQKSNLIRHLRTHTGEKPYICRECGLGFTRKSNLIQHQRTHTGEKPYICRECGQGLTWKSSLIQHQRTHTGEKPYICRECGRGFTWKSSLIQHQRTHTVEK.

A disordered region spans residues 1–23 (MSRTMNTNKPEENSTEGDAGKLE). One can recognise a KRAB-related domain in the interval 27–90 (KVKDEFKDIS…QRQAIKPQIN (64 aa)). The disordered stretch occupies residues 149-172 (SEHAQKPVCSPEEGNTSGQHFGKK). Cys209, Cys212, Cys220, and His223 together coordinate Zn(2+). The SET domain occupies 248–362 (PGLRIGPSGI…PGRELLVWYG (115 aa)). S-adenosyl-L-methionine is bound by residues 260 to 262 (AGL), Tyr295, and 324 to 325 (NC). A substrate-binding site is contributed by 292–298 (NSGYSWL). Residue Tyr361 participates in substrate binding. At Lys372 the chain carries N6,N6,N6-trimethyllysine; alternate. The residue at position 372 (Lys372) is an N6-methyllysine; alternate. Residues Lys376 and Lys378 each carry the N6-methyllysine modification. The segment at 392–415 (HPCFLCSLAFSSQKFLTQHVEWNH) adopts a C2H2-type 1 zinc-finger fold. Residues Cys394, Cys397, His410, and His415 each coordinate Zn(2+). Basic and acidic residues predominate over residues 443–457 (FDSQNKNDKASNEVK). The tract at residues 443 to 497 (FDSQNKNDKASNEVKRKSKPRHKWTRQRISTAFSSTLKEQMRSEESKRTVEEELR) is disordered. Basic residues predominate over residues 458 to 468 (RKSKPRHKWTR). A compositionally biased stretch (polar residues) spans 469-480 (QRISTAFSSTLK). Positions 481 to 497 (EQMRSEESKRTVEEELR) are enriched in basic and acidic residues. Residues 522–540 (QCGQCFSDKSNVSEHQRTH) form a C2H2-type 2; degenerate zinc finger. C2H2-type zinc fingers lie at residues 546–568 (YICR…QRTH), 574–596 (YICR…QRTH), 602–624 (YICR…QRTH), 630–652 (YICR…QRTH), 658–680 (YICR…QRTH), 686–708 (YICR…LRTH), 714–736 (YICR…QRTH), 742–764 (YICR…QRTH), and 770–792 (YICR…QRTH). The Zn(2+) site is built by Cys716, Cys719, His732, His736, Cys744, Cys747, His760, His764, Cys772, Cys775, His788, and His792.

This sequence belongs to the class V-like SAM-binding methyltransferase superfamily. Homodimer. Interacts with EHMT2 and CDYL; interaction only takes place when PRDM9 is bound to hotspot DNA. Interacts with CXXC1; this interaction does not link PRDM9-activated recombination hotspot sites with DSB machinery and is not required for the hotspot recognition pathway. Forms a complex with EWSR1, REC8, SYCP3 and SYCP1; complex formation is dependent of phosphorylated form of REC8 and requires PRDM9 bound to hotspot DNA; EWSR1 joins PRDM9 with the chromosomal axis through REC8. In terms of processing, mono-methylated; automethylated. Tri-methylated; automethylated. Mono-methylation is predominant; automethylation is lower and slower than H3 peptide methylation and is in a highest S-adenosyl-L-methionine concentration-dependent. There are two major sites for automethylation at Lys-372 and Lys-378. Lysines can be simultaneously methylated, such as Lys-372(me3)/Lys-376(me1), Lys-372(me1)/Lys-378(me1) and Lys-372(me1)/Lys-376(me1)/Lys-378(me1). Automethylation is an intramolecular (cis) process.

The protein localises to the nucleus. It localises to the chromosome. The catalysed reaction is L-lysyl-[protein] + S-adenosyl-L-methionine = N(6)-methyl-L-lysyl-[protein] + S-adenosyl-L-homocysteine + H(+). It carries out the reaction N(6)-methyl-L-lysyl-[protein] + S-adenosyl-L-methionine = N(6),N(6)-dimethyl-L-lysyl-[protein] + S-adenosyl-L-homocysteine + H(+). The enzyme catalyses L-lysyl(4)-[histone H3] + 3 S-adenosyl-L-methionine = N(6),N(6),N(6)-trimethyl-L-lysyl(4)-[histone H3] + 3 S-adenosyl-L-homocysteine + 3 H(+). It catalyses the reaction L-lysyl(36)-[histone H3] + 3 S-adenosyl-L-methionine = N(6),N(6),N(6)-trimethyl-L-lysyl(36)-[histone H3] + 3 S-adenosyl-L-homocysteine + 3 H(+). The catalysed reaction is L-lysyl(9)-[histone H3] + 3 S-adenosyl-L-methionine = N(6),N(6),N(6)-trimethyl-L-lysyl(9)-[histone H3] + 3 S-adenosyl-L-homocysteine + 3 H(+). It carries out the reaction L-lysyl(20)-[histone H4] + S-adenosyl-L-methionine = N(6)-methyl-L-lysyl(20)-[histone H4] + S-adenosyl-L-homocysteine + H(+). The enzyme catalyses N(6)-methyl-L-lysyl(20)-[histone H4] + S-adenosyl-L-methionine = N(6),N(6)-dimethyl-L-lysyl(20)-[histone H4] + S-adenosyl-L-homocysteine + H(+). Histone methyltransferase that sequentially mono-, di-, and tri-methylates both 'Lys-4' (H3K4) and 'Lys-36' (H3K36) of histone H3 to produce respectively trimethylated 'Lys-4' (H3K4me3) and trimethylated 'Lys-36' (H3K36me3) histone H3 and plays a key role in meiotic prophase by determining hotspot localization thereby promoting meiotic recombination. Can also methylate all four core histones with H3 being the best substrate and the most highly modified. Is also able, on one hand, to mono and di-methylate H4K20 and on other hand to trimethylate H3K9 with the di-methylated H3K9 as the best substrate. During meiotic prophase, binds specific DNA sequences through its zinc finger domains thereby determining hotspot localization where it promotes local H3K4me3 and H3K36me3 enrichment on the same nucleosomes through its histone methyltransferase activity. Thereby promotes double-stranded breaks (DSB) formation, at this subset of PRDM9-binding sites, that initiates meiotic recombination for the proper meiotic progression. During meiotic progression hotspot-bound PRDM9 interacts with several complexes; in early leptonema binds CDYL and EHMT2 followed by EWSR1 and CXXC1 by the end of leptonema. EWSR1 joins PRDM9 with the chromosomal axis through REC8. In this way, controls the DSB repair pathway, pairing of homologous chromosomes and sex body formation. Moreover plays a central role in the transcriptional activation of genes during early meiotic prophase thanks to H3K4me3 and H3K36me3 enrichment that represents a specific tag for epigenetic transcriptional activation. In addition performs automethylation. Acetylation and phosphorylation of histone H3 attenuate or prevent histone H3 methylation. This chain is Histone-lysine N-methyltransferase PRDM9, found in Rattus norvegicus (Rat).